Reading from the N-terminus, the 566-residue chain is Phenylalanine--tRNA ligase beta subunit (566 aa).

One can recognise a B5 domain in the interval 287–362; sequence YFQEEVEFDV…IGEGLASFYP (76 aa). Residues D340, D346, E349, and D350 each contribute to the Mg(2+) site.

It belongs to the phenylalanyl-tRNA synthetase beta subunit family. Type 2 subfamily. As to quaternary structure, tetramer of two alpha and two beta subunits. Mg(2+) is required as a cofactor.

It localises to the cytoplasm. The enzyme catalyses tRNA(Phe) + L-phenylalanine + ATP = L-phenylalanyl-tRNA(Phe) + AMP + diphosphate + H(+). This chain is Phenylalanine--tRNA ligase beta subunit, found in Borrelia garinii subsp. bavariensis (strain ATCC BAA-2496 / DSM 23469 / PBi) (Borreliella bavariensis).